The sequence spans 101 residues: Ferredoxin Fdx2 (101 aa).

2 4Fe-4S ferredoxin-type domains span residues 1–29 (MATY…EGDE) and 31–64 (YVID…PNPQ). [4Fe-4S] cluster contacts are provided by cysteine 9, cysteine 12, cysteine 15, cysteine 19, cysteine 38, cysteine 41, cysteine 50, and cysteine 54.

It depends on [4Fe-4S] cluster as a cofactor.

Its function is as follows. Ferredoxins are iron-sulfur proteins that transfer electrons in a wide variety of metabolic reactions. Fdx2 can receive electrons from both FdR_A and FdR_B ferredoxin reductases, with a preference for FdR_B compared with FdR_A, and transfer the electrons to the cytochrome P450 CYP260A1. This Sorangium cellulosum (strain So ce56) (Polyangium cellulosum (strain So ce56)) protein is Ferredoxin Fdx2.